We begin with the raw amino-acid sequence, 205 residues long: Cerebellin-3 (205 aa).

Positions 1-32 are cleaved as a signal peptide; the sequence is MLGAKPHWLPGPLHSPGLPLVLVLLALGAGWA. The 139-residue stretch at 67-205 folds into the C1q domain; sequence APPGRVAFAA…SFSGFLIFPL (139 aa). The necessary for interaction with CBLN3, and homotrimerization stretch occupies residues 72–205; the sequence is VAFAAVRSHH…SFSGFLIFPL (134 aa). Residue Asn90 is glycosylated (N-linked (GlcNAc...) asparagine).

As to quaternary structure, heterohexamer; disulfide-linked heterotrimers. Interacts with CBLN1. May also form oligomers with CBLN2 and CBLN4.

Its subcellular location is the endoplasmic reticulum. It is found in the golgi apparatus. It localises to the cis-Golgi network. The protein localises to the secreted. The protein resides in the synapse. Functionally, may be involved in synaptic functions in the CNS. The protein is Cerebellin-3 (CBLN3) of Homo sapiens (Human).